The primary structure comprises 190 residues: Elongation factor P-like protein (190 aa).

It belongs to the elongation factor P family.

The polypeptide is Elongation factor P-like protein (Photorhabdus laumondii subsp. laumondii (strain DSM 15139 / CIP 105565 / TT01) (Photorhabdus luminescens subsp. laumondii)).